A 307-amino-acid chain; its full sequence is N-acetylmuramic acid 6-phosphate etherase 2 (307 aa).

Positions Ile62–Lys225 constitute an SIS domain. Catalysis depends on Glu90, which acts as the Proton donor. Glu121 is an active-site residue.

The protein belongs to the GCKR-like family. MurNAc-6-P etherase subfamily. In terms of assembly, homodimer.

It catalyses the reaction N-acetyl-D-muramate 6-phosphate + H2O = N-acetyl-D-glucosamine 6-phosphate + (R)-lactate. It participates in amino-sugar metabolism; 1,6-anhydro-N-acetylmuramate degradation. It functions in the pathway amino-sugar metabolism; N-acetylmuramate degradation. Its pathway is cell wall biogenesis; peptidoglycan recycling. Its function is as follows. Specifically catalyzes the cleavage of the D-lactyl ether substituent of MurNAc 6-phosphate, producing GlcNAc 6-phosphate and D-lactate. Together with AnmK, is also required for the utilization of anhydro-N-acetylmuramic acid (anhMurNAc) either imported from the medium or derived from its own cell wall murein, and thus plays a role in cell wall recycling. This is N-acetylmuramic acid 6-phosphate etherase 2 from Vibrio cholerae serotype O1 (strain ATCC 39315 / El Tor Inaba N16961).